Here is a 908-residue protein sequence, read N- to C-terminus: DNA mismatch repair protein MutS (908 aa).

662–669 (GPNMGGKS) is a binding site for ATP.

The protein belongs to the DNA mismatch repair MutS family.

Its function is as follows. This protein is involved in the repair of mismatches in DNA. It is possible that it carries out the mismatch recognition step. This protein has a weak ATPase activity. This chain is DNA mismatch repair protein MutS, found in Rhizobium etli (strain ATCC 51251 / DSM 11541 / JCM 21823 / NBRC 15573 / CFN 42).